Here is a 655-residue protein sequence, read N- to C-terminus: MGNGMCSRKQKRIFQTLLLLTVVFGFLYGAMLYLELQTQLRKAEAVALKYQQHQDSLSAQLQVVYEHRSRLEKSLQKERLEHKKAKEDFLVYKLEAQETLNKGRQDSNSRYSALNVQHQMLKSQHEELRKQHSDLEEEHRKQGEDFSRTFNDHKQRYLQLQQEKEQELSKLKETVYNLREENRQLRKAHQDIHTQLQDVKTQVAEYKQLKDTLNRIPSFRNPDPVEQQNVTFPHGTHPPQGYNGREKLTGELQEVQPNHEAGPRRMEEKPLSSMQKDAGFQALEEQNQVEPREPEERQVEEEHRKALEEEEMEQVGQAEHLEEEHDPSPEEQDRDWRDQQGQNAAHLLDGHPQAEVEHSTKAATNFQSPYEEQLEQQRLAARRDEEAQRLREHQEALHQQRLHGQLLRQQQQQQFLAREMAQQKQVAHEDGQQQHQEQLRQQAHYNAVENDIAQGVEDQGIPEEEGGAYDRDNQRQDEAEGDPGNRQELREPGHQEGDPEVEADRAAVEDINPADDPNNQGEDEFEEAEQVREENLPEESEEQKQSEAKQGNVEMDEHLVMAGNPDQQEDNVDEQYQDEGEEEVQEDLTEEKKREMEHNVEETYGEHPDDKNNDGEEQGVHNRAHPKGRQEHYEEEEDEEDGAAVAEKSHRRAEM.

Gly-2 carries the N-myristoyl glycine lipid modification. Residues 2–12 (GNGMCSRKQKR) lie on the Cytoplasmic side of the membrane. Residues 13–33 (IFQTLLLLTVVFGFLYGAMLY) traverse the membrane as a helical; Signal-anchor for type II membrane protein segment. Residues 34 to 655 (LELQTQLRKA…AEKSHRRAEM (622 aa)) are Lumenal-facing. The segment at 38–107 (TQLRKAEAVA…ETLNKGRQDS (70 aa)) is golgi targeting. The stretch at 66–216 (EHRSRLEKSL…KQLKDTLNRI (151 aa)) forms a coiled coil. Residues 80 to 175 (LEHKKAKEDF…QELSKLKETV (96 aa)) are endosome targeting. Residues 122-145 (KSQHEELRKQHSDLEEEHRKQGED) form a disordered region. Positions 123-145 (SQHEELRKQHSDLEEEHRKQGED) are enriched in basic and acidic residues. A golgi targeting region spans residues 176-220 (YNLREENRQLRKAHQDIHTQLQDVKTQVAEYKQLKDTLNRIPSFR). Asn-229 is a glycosylation site (N-linked (GlcNAc...) asparagine). 2 disordered regions span residues 256 to 275 (QPNHEAGPRRMEEKPLSSMQ) and 285 to 655 (EQNQ…RAEM). Composition is skewed to basic and acidic residues over residues 261 to 270 (AGPRRMEEKP), 290 to 307 (EPREPEERQVEEEHRKAL), 319 to 328 (EHLEEEHDPS), and 348 to 360 (LDGHPQAEVEHST). Ser-328 is modified (phosphoserine). Over residues 361 to 370 (KAATNFQSPY) the composition is skewed to polar residues. Residues 381-398 (ARRDEEAQRLREHQEALH) are compositionally biased toward basic and acidic residues. Low complexity-rich tracts occupy residues 399–423 (QQRLHGQLLRQQQQQQFLAREMAQQ) and 433–442 (QQHQEQLRQQ). Positions 468-508 (AYDRDNQRQDEAEGDPGNRQELREPGHQEGDPEVEADRAAV) are enriched in basic and acidic residues. Ser-540 carries the phosphoserine modification. Over residues 567 to 589 (QQEDNVDEQYQDEGEEEVQEDLT) the composition is skewed to acidic residues. Tyr-576 carries the phosphotyrosine modification. Thr-589 is subject to Phosphothreonine. Residues 590–620 (EEKKREMEHNVEETYGEHPDDKNNDGEEQGV) show a composition bias toward basic and acidic residues. Tyr-633 carries the post-translational modification Phosphotyrosine. Positions 633–642 (YEEEEDEEDG) are enriched in acidic residues.

Belongs to the GOLIM4 family. In terms of processing, phosphorylated by c-AMP-dependent kinases most probably in its lumenal part. Post-translationally, O-glycosylated; modified by sialic acid residues. N-glycosylated; N-glycans are of the complex type and modified by sialic acid residues. As to expression, expressed by spermatozoa (at protein level).

It localises to the golgi apparatus. It is found in the golgi stack membrane. The protein localises to the endosome membrane. The protein resides in the membrane. Its function is as follows. Plays a role in endosome to Golgi protein trafficking; mediates protein transport along the late endosome-bypass pathway from the early endosome to the Golgi. The polypeptide is Golgi integral membrane protein 4 (Golim4) (Mus musculus (Mouse)).